The primary structure comprises 290 residues: tRNA-cytidine(32) 2-sulfurtransferase (290 aa).

The PP-loop motif motif lies at 66–71; the sequence is SGGKDS. [4Fe-4S] cluster is bound by residues cysteine 141, cysteine 144, and cysteine 232.

It belongs to the TtcA family. In terms of assembly, homodimer. The cofactor is Mg(2+). Requires [4Fe-4S] cluster as cofactor.

Its subcellular location is the cytoplasm. The enzyme catalyses cytidine(32) in tRNA + S-sulfanyl-L-cysteinyl-[cysteine desulfurase] + AH2 + ATP = 2-thiocytidine(32) in tRNA + L-cysteinyl-[cysteine desulfurase] + A + AMP + diphosphate + H(+). Its pathway is tRNA modification. Its function is as follows. Catalyzes the ATP-dependent 2-thiolation of cytidine in position 32 of tRNA, to form 2-thiocytidine (s(2)C32). The sulfur atoms are provided by the cysteine/cysteine desulfurase (IscS) system. This chain is tRNA-cytidine(32) 2-sulfurtransferase, found in Rhizobium etli (strain ATCC 51251 / DSM 11541 / JCM 21823 / NBRC 15573 / CFN 42).